A 142-amino-acid chain; its full sequence is Large ribosomal subunit protein uL11 (142 aa).

The protein belongs to the universal ribosomal protein uL11 family. In terms of assembly, part of the ribosomal stalk of the 50S ribosomal subunit. Interacts with L10 and the large rRNA to form the base of the stalk. L10 forms an elongated spine to which L12 dimers bind in a sequential fashion forming a multimeric L10(L12)X complex. One or more lysine residues are methylated.

Forms part of the ribosomal stalk which helps the ribosome interact with GTP-bound translation factors. The sequence is that of Large ribosomal subunit protein uL11 from Nitrobacter hamburgensis (strain DSM 10229 / NCIMB 13809 / X14).